Here is a 156-residue protein sequence, read N- to C-terminus: MYTSKQPFLKSKQPFRKSKQPFRKSKQPFRKFKKPFRKSKQPFRRRPRIGPGDRIDYRNMSLINRFISEQGKILSRRINRLTLKQQRLITLAIKQARILSFLPFRNYENEKQFQAQSISIITGSRPRKNRHIPQLTEKYNSNRNLRNNNRNLSSDC.

Positions 1 to 54 are disordered; it reads MYTSKQPFLKSKQPFRKSKQPFRKSKQPFRKFKKPFRKSKQPFRRRPRIGPGDR. Over residues 13–48 the composition is skewed to basic residues; that stretch reads QPFRKSKQPFRKSKQPFRKFKKPFRKSKQPFRRRPR.

This sequence belongs to the bacterial ribosomal protein bS18 family. Part of the 30S ribosomal subunit.

It localises to the plastid. The protein resides in the chloroplast. The chain is Small ribosomal subunit protein bS18c from Lolium perenne (Perennial ryegrass).